Consider the following 58-residue polypeptide: Ribosome modulation factor (58 aa).

This sequence belongs to the ribosome modulation factor family.

The protein localises to the cytoplasm. Functionally, during stationary phase, converts 70S ribosomes to an inactive dimeric form (100S ribosomes). The polypeptide is Ribosome modulation factor (Shewanella amazonensis (strain ATCC BAA-1098 / SB2B)).